Reading from the N-terminus, the 338-residue chain is Limbic system-associated membrane protein (338 aa).

Positions 1-28 (MVGRVQPDRKQLPLVLLRLLCLLPTGLP) are cleaved as a signal peptide. 3 Ig-like C2-type domains span residues 29–122 (VRSV…PKTS), 132–214 (PKIS…VKVT), and 219–304 (PTIT…ASLV). 2 N-linked (GlcNAc...) asparagine glycosylation sites follow: Asn-40 and Asn-66. Cys-53 and Cys-111 are joined by a disulfide. Phosphotyrosine is present on Tyr-94. Asn-136 and Asn-148 each carry an N-linked (GlcNAc...) asparagine glycan. 2 disulfides stabilise this stretch: Cys-153-Cys-197 and Cys-239-Cys-290. N-linked (GlcNAc...) asparagine glycans are attached at residues Asn-279, Asn-287, and Asn-300. Asn-315 carries the GPI-anchor amidated asparagine; alternate lipid modification. An N-linked (GlcNAc...) asparagine; alternate glycan is attached at Asn-315. Residues 316–338 (GSISLAVPLWLLAASLFCLLSKC) constitute a propeptide, removed in mature form.

This sequence belongs to the immunoglobulin superfamily. IgLON family. Expressed mostly by neurons comprising limbic-associated cortical and subcortical regions that function in cognition, emotion, memory, and learning.

The protein resides in the cell membrane. Mediates selective neuronal growth and axon targeting. Contributes to the guidance of developing axons and remodeling of mature circuits in the limbic system. Essential for normal growth of the hippocampal mossy fiber projection. The protein is Limbic system-associated membrane protein (Lsamp) of Rattus norvegicus (Rat).